We begin with the raw amino-acid sequence, 380 residues long: Protein FAM110B (380 aa).

A disordered region spans residues 92–272 (ALGSPTLKGF…RPSLQRSKSD (181 aa)). A compositionally biased stretch (gly residues) spans 100-110 (GFGGGGGGAKS). The span at 127–138 (ILNSSEGSSTGS) shows a compositional bias: polar residues. Residues 153–162 (DAAELHRHSF) are compositionally biased toward basic and acidic residues. Over residues 239 to 248 (KVAAPAAVKS) the composition is skewed to low complexity. 2 positions are modified to phosphoserine: Ser-248 and Ser-311. A disordered region spans residues 327–347 (DCEQSQDSNSDLRNDDSANDR). Residues 336-345 (SDLRNDDSAN) show a composition bias toward basic and acidic residues.

The protein belongs to the FAM110 family.

The protein resides in the cytoplasm. Its subcellular location is the cytoskeleton. It is found in the microtubule organizing center. It localises to the centrosome. This Bos taurus (Bovine) protein is Protein FAM110B (FAM110B).